A 160-amino-acid chain; its full sequence is UPF0178 protein BPP1051 (160 aa).

It belongs to the UPF0178 family.

This chain is UPF0178 protein BPP1051, found in Bordetella parapertussis (strain 12822 / ATCC BAA-587 / NCTC 13253).